Consider the following 224-residue polypeptide: Pyridoxine/pyridoxamine 5'-phosphate oxidase (224 aa).

Residues 14-17 and Lys-76 each bind substrate; that span reads REHY. FMN is bound by residues 71–76, 86–87, Arg-92, Lys-93, and Gln-115; these read RTVLMK and YT. Residues Tyr-133, Arg-137, and Ser-141 each coordinate substrate. FMN is bound by residues 150 to 151 and Trp-196; that span reads QS. Residue 202–204 participates in substrate binding; the sequence is RLH. FMN is bound at residue Arg-206.

It belongs to the pyridoxamine 5'-phosphate oxidase family. In terms of assembly, homodimer. It depends on FMN as a cofactor.

The enzyme catalyses pyridoxamine 5'-phosphate + O2 + H2O = pyridoxal 5'-phosphate + H2O2 + NH4(+). It catalyses the reaction pyridoxine 5'-phosphate + O2 = pyridoxal 5'-phosphate + H2O2. It participates in cofactor metabolism; pyridoxal 5'-phosphate salvage; pyridoxal 5'-phosphate from pyridoxamine 5'-phosphate: step 1/1. It functions in the pathway cofactor metabolism; pyridoxal 5'-phosphate salvage; pyridoxal 5'-phosphate from pyridoxine 5'-phosphate: step 1/1. In terms of biological role, catalyzes the oxidation of either pyridoxine 5'-phosphate (PNP) or pyridoxamine 5'-phosphate (PMP) into pyridoxal 5'-phosphate (PLP). In Streptomyces avermitilis (strain ATCC 31267 / DSM 46492 / JCM 5070 / NBRC 14893 / NCIMB 12804 / NRRL 8165 / MA-4680), this protein is Pyridoxine/pyridoxamine 5'-phosphate oxidase.